The chain runs to 267 residues: L-aspartate dehydrogenase (267 aa).

NAD(+) is bound by residues A124 and N190. Residue H220 is part of the active site.

It belongs to the L-aspartate dehydrogenase family.

It catalyses the reaction L-aspartate + NADP(+) + H2O = oxaloacetate + NH4(+) + NADPH + H(+). It carries out the reaction L-aspartate + NAD(+) + H2O = oxaloacetate + NH4(+) + NADH + H(+). The protein operates within cofactor biosynthesis; NAD(+) biosynthesis; iminoaspartate from L-aspartate (dehydrogenase route): step 1/1. Functionally, specifically catalyzes the NAD or NADP-dependent dehydrogenation of L-aspartate to iminoaspartate. This Polaromonas sp. (strain JS666 / ATCC BAA-500) protein is L-aspartate dehydrogenase.